Here is an 859-residue protein sequence, read N- to C-terminus: Leucine--tRNA ligase (859 aa).

A 'HIGH' region motif is present at residues 42–52 (PYPSGRLHMGH). The 'KMSKS' region signature appears at 618 to 622 (KMSKS). Lys621 contributes to the ATP binding site.

Belongs to the class-I aminoacyl-tRNA synthetase family.

Its subcellular location is the cytoplasm. The enzyme catalyses tRNA(Leu) + L-leucine + ATP = L-leucyl-tRNA(Leu) + AMP + diphosphate. In Shewanella baltica (strain OS223), this protein is Leucine--tRNA ligase.